The primary structure comprises 331 residues: Aromatic 2-oxoacid reductase (331 aa).

NAD(+)-binding positions include 154–155, Asp175, 205–206, Asn211, 232–234, and Asp258; these read RI, AP, and AAR. The active site involves Arg234. Residue Glu263 is part of the active site. The Proton donor role is filled by His295.

Belongs to the D-isomer specific 2-hydroxyacid dehydrogenase family.

The catalysed reaction is (R)-3-phenyllactate + NAD(+) = 3-phenylpyruvate + NADH + H(+). The enzyme catalyses (2R)-2-hydroxy-3-(4-hydroxyphenyl)propanoate + NAD(+) = 3-(4-hydroxyphenyl)pyruvate + NADH + H(+). It carries out the reaction 3-(indol-3-yl)lactate + NAD(+) = indole-3-pyruvate + NADH + H(+). Its pathway is amino-acid degradation. Essential for the reductive metabolism of L-phenylalanine, L-tyrosine and L-tryptophan. Catalyzes the conversion of phenylpyruvic acid to phenyllactic acid, 4-hydroxy-phenylpyruvic acid to 4-hydroxy-phenyllactic acid, and indolepyruvic acid to indolelactic acid. In Clostridium sporogenes (strain ATCC 7955 / DSM 767 / NBRC 16411 / NCIMB 8053 / NCTC 8594 / PA 3679), this protein is Aromatic 2-oxoacid reductase.